Here is a 117-residue protein sequence, read N- to C-terminus: MDSNLRNLKDFFTLYNKVTELCFSRCVDNLSQRDLGGHEDLCVDRCVTKFARFNQNMMKVYVDVQTTINAKRMEEMEENARKAEQQQREQEKERLKEAAATAVLTPVQPPVAGNLSM.

The Twin CX3C motif signature appears at 22–46; sequence CFSRCVDNLSQRDLGGHEDLCVDRC. Disulfide bonds link C22-C46 and C26-C42. A compositionally biased stretch (basic and acidic residues) spans 75 to 97; it reads EMEENARKAEQQQREQEKERLKE. Positions 75 to 117 are disordered; sequence EMEENARKAEQQQREQEKERLKEAAATAVLTPVQPPVAGNLSM.

Belongs to the small Tim family. As to quaternary structure, component of the TIM22 complex, whose core is composed of Tim22, associated with peripheral protein Tim9b/Tim10b and the 70 kDa heterohexamer. In most cases, the 70 kDa complex is composed of TIMM9 and TIMM10.

It localises to the mitochondrion inner membrane. Component of the TIM22 complex, a complex that mediates the import and insertion of multi-pass transmembrane proteins into the mitochondrial inner membrane. The TIM22 complex forms a twin-pore translocase that uses the membrane potential as the external driving force. In the TIM22 complex, it may act as a docking point for the soluble 70 kDa complex that guides the target proteins in transit through the aqueous mitochondrial intermembrane space. This Drosophila melanogaster (Fruit fly) protein is Mitochondrial import inner membrane translocase subunit Tim10B (Tim9b).